Reading from the N-terminus, the 387-residue chain is Glutamate N-acetyltransferase (387 aa).

Residues Thr-140, Lys-162, Thr-173, Glu-257, Asn-382, and Thr-387 each contribute to the substrate site. Catalysis depends on Thr-173, which acts as the Nucleophile.

It belongs to the ArgJ family. Heterotetramer of two alpha and two beta chains.

It is found in the cytoplasm. It catalyses the reaction N(2)-acetyl-L-ornithine + L-glutamate = N-acetyl-L-glutamate + L-ornithine. It participates in amino-acid biosynthesis; L-arginine biosynthesis; L-ornithine and N-acetyl-L-glutamate from L-glutamate and N(2)-acetyl-L-ornithine (cyclic): step 1/1. Its function is as follows. Catalyzes the transfer of the acetyl group from N(2)-acetylornithine to glutamate, forming N-acetylglutamate and L-ornithine. This is Glutamate N-acetyltransferase from Methanopyrus kandleri (strain AV19 / DSM 6324 / JCM 9639 / NBRC 100938).